We begin with the raw amino-acid sequence, 120 residues long: Small ribosomal subunit protein uS13 (120 aa).

Residues 92-120 (HRKGLPVRGQTTKNNARTRKGKKKTVGSK) form a disordered region. The segment covering 107–120 (ARTRKGKKKTVGSK) has biased composition (basic residues).

The protein belongs to the universal ribosomal protein uS13 family. In terms of assembly, part of the 30S ribosomal subunit. Forms a loose heterodimer with protein S19. Forms two bridges to the 50S subunit in the 70S ribosome.

In terms of biological role, located at the top of the head of the 30S subunit, it contacts several helices of the 16S rRNA. In the 70S ribosome it contacts the 23S rRNA (bridge B1a) and protein L5 of the 50S subunit (bridge B1b), connecting the 2 subunits; these bridges are implicated in subunit movement. Contacts the tRNAs in the A and P-sites. The chain is Small ribosomal subunit protein uS13 from Helicobacter pylori (strain J99 / ATCC 700824) (Campylobacter pylori J99).